Consider the following 149-residue polypeptide: MHCPFCSAVDTKVIDSRLVGDGSQVRRRRQCLVCNERFTTFEVAELVMPRVVKSNGVREPFNEDKLRSGMLKALEKRPVNSDDVEMAISHIKSQLRATGEREVATKMVGNLVMDALKKLDKVAYIRFASVYRSFEDVREFGEEIARLQE.

A zinc finger lies at 3–34 (CPFCSAVDTKVIDSRLVGDGSQVRRRRQCLVC). One can recognise an ATP-cone domain in the interval 49–139 (PRVVKSNGVR…VYRSFEDVRE (91 aa)).

The protein belongs to the NrdR family. Zn(2+) is required as a cofactor.

Negatively regulates transcription of bacterial ribonucleotide reductase nrd genes and operons by binding to NrdR-boxes. The sequence is that of Transcriptional repressor NrdR from Edwardsiella ictaluri (strain 93-146).